Here is a 118-residue protein sequence, read N- to C-terminus: MPTKIEARLKRKNRIRKKLSGTTERPRLTVYKSLKHIYAQVVDDTTGKTLAFASSLSKDLKGQDEGDKKADAKRVGALIAQKCKAANVEAVVFDRNGFPYHGRIAAVADAAREAGLKF.

The protein belongs to the universal ribosomal protein uL18 family. As to quaternary structure, part of the 50S ribosomal subunit; part of the 5S rRNA/L5/L18/L25 subcomplex. Contacts the 5S and 23S rRNAs.

This is one of the proteins that bind and probably mediate the attachment of the 5S RNA into the large ribosomal subunit, where it forms part of the central protuberance. The polypeptide is Large ribosomal subunit protein uL18 (Myxococcus xanthus (strain DK1622)).